Consider the following 153-residue polypeptide: Arachidonate 5-lipoxygenase-activating protein (153 aa).

The Lumenal segment spans residues 1–8; that stretch reads MDQETVGN. A helical transmembrane segment spans residues 9–30; it reads IVLLAIVTLISVVQNGFFAHKV. Topologically, residues 31-52 are cytoplasmic; it reads EHESKTHNGRSFQRTGPLAFER. The helical transmembrane segment at 53 to 77 threads the bilayer; that stretch reads VYTANQNCVDAYPTFLVMLWSAGLL. Over 78–80 the chain is Lumenal; sequence CSQ. The chain crosses the membrane as a helical span at residues 81–102; the sequence is VPAAFAGLMYLFVRQKYFVGYL. At 103-107 the chain is on the cytoplasmic side; it reads GERTQ. An intramembrane segment occupies 108-115; it reads STPGYIFG. A helical transmembrane segment spans residues 116 to 128; that stretch reads KRIILFLFAMSLA. The Lumenal segment spans residues 129–153; the sequence is GILNYFLIAFFGSDFENYIKTVTTT.

Belongs to the MAPEG family. Homotrimer. Interacts with LTC4S and ALOX5.

The protein localises to the nucleus membrane. The protein resides in the endoplasmic reticulum membrane. Required for leukotriene biosynthesis by ALOX5 (5-lipoxygenase). Anchors ALOX5 to the membrane. Binds arachidonic acid, and could play an essential role in the transfer of arachidonic acid to ALOX5. Binds to MK-886, a compound that blocks the biosynthesis of leukotrienes. The sequence is that of Arachidonate 5-lipoxygenase-activating protein (ALOX5AP) from Ovis aries (Sheep).